A 400-amino-acid chain; its full sequence is Telomere repeat-binding protein 6 (400 aa).

The Ubiquitin-like domain maps to 173–252 (VKFGIKSLNI…DDENLGSLGF (80 aa)). The region spanning 310 to 369 (VQRRIRRPFTVSEVEALVQAVERLGTGRWRDVKSHAFNHVNHRTYVDLKDKWKTLVHTAK) is the HTH myb-type domain. The H-T-H motif DNA-binding region spans 338–365 (WRDVKSHAFNHVNHRTYVDLKDKWKTLV).

As to quaternary structure, homodimer. As to expression, expressed ubiquitously.

It localises to the nucleus. Binds specifically to the plant telomeric double-stranded DNA sequences. At least 4 repeats of telomeric sequences are required for binding. This chain is Telomere repeat-binding protein 6 (TRP6), found in Arabidopsis thaliana (Mouse-ear cress).